The primary structure comprises 263 residues: uncharacterized protein (263 aa).

The protein belongs to the flavoredoxin family. Requires FMN as cofactor.

This is an uncharacterized protein from Aeropyrum pernix (strain ATCC 700893 / DSM 11879 / JCM 9820 / NBRC 100138 / K1).